The chain runs to 542 residues: Phosphoenolpyruvate carboxykinase (ATP) (542 aa).

R67, Y208, and K214 together coordinate substrate. ATP-binding positions include K214, H233, and 249–257; that span reads GLSGTGKTT. Positions 214 and 233 each coordinate Mn(2+). Position 270 (D270) interacts with Mn(2+). Residues E298, R334, 450–451, and T456 each bind ATP; that span reads RI. A substrate-binding site is contributed by R334.

This sequence belongs to the phosphoenolpyruvate carboxykinase (ATP) family. Monomer. It depends on Mn(2+) as a cofactor.

The protein localises to the cytoplasm. It carries out the reaction oxaloacetate + ATP = phosphoenolpyruvate + ADP + CO2. It functions in the pathway carbohydrate biosynthesis; gluconeogenesis. Involved in the gluconeogenesis. Catalyzes the conversion of oxaloacetate (OAA) to phosphoenolpyruvate (PEP) through direct phosphoryl transfer between the nucleoside triphosphate and OAA. The sequence is that of Phosphoenolpyruvate carboxykinase (ATP) from Vibrio vulnificus (strain CMCP6).